Consider the following 428-residue polypeptide: Palmitoyltransferase pfa4 (428 aa).

Residues 1-10 (MLCRSFNISQ) are Cytoplasmic-facing. Residues 11–31 (LAIPFVSVLISFLAYTSQLFF) form a helical membrane-spanning segment. Residues 32–43 (YYFEEAPLRSEE) are Lumenal-facing. Residues 44-61 (FWRLNIFAVCIWVCYYRA) traverse the membrane as a helical segment. Topologically, residues 62–134 (CTVDPGRIPK…SNCVSHFTYP (73 aa)) are cytoplasmic. The region spanning 91 to 141 (RWCRRCEAFKPPRAHHCKTCQRCIPKMDHHCPWTSNCVSHFTYPHFMRFLF) is the DHHC domain. Cysteine 121 (S-palmitoyl cysteine intermediate) is an active-site residue. The chain crosses the membrane as a helical span at residues 135-155 (HFMRFLFYAVVGMGYLETLLF). Over 156–177 (ERASIVWASRHLPSYLGPGLGQ) the chain is Lumenal. Residues 178-198 (LVHLFILLVVNSLTWLALFIL) form a helical membrane-spanning segment. The Cytoplasmic portion of the chain corresponds to 199 to 428 (LLRSIWSLAL…GILMQRRRQQ (230 aa)). The segment at 339 to 400 (QRSNDASHSG…WKNSEGDRLR (62 aa)) is disordered. Positions 360-373 (DRFNENKAKERLSE) are enriched in basic and acidic residues. Over residues 374-388 (SESDFSDDEEVQDGE) the composition is skewed to acidic residues. Residues 389-400 (EGWKNSEGDRLR) are compositionally biased toward basic and acidic residues.

It belongs to the DHHC palmitoyltransferase family. PFA4 subfamily.

It localises to the endoplasmic reticulum membrane. It catalyses the reaction L-cysteinyl-[protein] + hexadecanoyl-CoA = S-hexadecanoyl-L-cysteinyl-[protein] + CoA. Its function is as follows. Mediates the reversible addition of palmitate to target proteins, thereby regulating their membrane association and biological function. In Aspergillus fumigatus (strain ATCC MYA-4609 / CBS 101355 / FGSC A1100 / Af293) (Neosartorya fumigata), this protein is Palmitoyltransferase pfa4.